The following is a 1031-amino-acid chain: Serine-repeat antigen protein 6 (1031 aa).

Residues 1–24 (MICPIFFLYIINVLFTQYFIKCEG) form the signal peptide. N74 carries N-linked (GlcNAc...) asparagine glycosylation. Positions 91–101 (KVVSSSESGKG) are enriched in low complexity. The disordered stretch occupies residues 91–163 (KVVSSSESGK…TESSSETLNK (73 aa)). Over residues 104–139 (VSHTKVTSEGLSDTQPNVTQSVSSSTHTPGSLDSTM) the composition is skewed to polar residues. N120 carries N-linked (GlcNAc...) asparagine glycosylation. Low complexity predominate over residues 140-158 (STEQHSSVSQSSLPTESSS). Residue N449 is glycosylated (N-linked (GlcNAc...) asparagine). The disordered stretch occupies residues 490–567 (TLPSESPSES…GDTNYVYDFD (78 aa)). Low complexity predominate over residues 492 to 505 (PSESPSESSSKSDS). The segment covering 511 to 535 (NDKDKNEDKDDMSKNSKEEFKNDDK) has biased composition (basic and acidic residues). N544 carries an N-linked (GlcNAc...) asparagine glycan. Residues 554–564 (NINNGDTNYVY) are compositionally biased toward low complexity. The N-linked (GlcNAc...) asparagine glycan is linked to N573. C644 is a catalytic residue. An N-linked (GlcNAc...) asparagine glycan is attached at N674. Active-site residues include H810 and N835. N-linked (GlcNAc...) asparagine glycosylation is found at N929 and N974.

This sequence belongs to the peptidase C1 family. Post-translationally, just prior to merozoite egress from host erythrocytes, proteolytically cleaved by SUB1 to generate the active 75kDa form.

It localises to the parasitophorous vacuole lumen. Its subcellular location is the parasitophorous vacuole membrane. Functionally, cysteine protease which plays an essential role in merozoite egress from host erythrocytes. May cleave host SPTB/beta spectrin and ANK1/ankyrin-1 which disrupts host erythrocyte actin cytoskeleton and leads to host erythrocyte cell membrane rupture. In Plasmodium falciparum (isolate 3D7), this protein is Serine-repeat antigen protein 6.